The sequence spans 290 residues: Agroclavine dehydrogenase (290 aa).

This sequence belongs to the fgaFS/easG family. In terms of assembly, monomer.

The catalysed reaction is agroclavine + NADP(+) = didehydroagroclavine + NADPH + H(+). The protein operates within alkaloid biosynthesis; ergot alkaloid biosynthesis. In terms of biological role, agroclavine dehydrogenase; part of the gene cluster that mediates the biosynthesis of fungal ergot alkaloid. DmaW catalyzes the first step of ergot alkaloid biosynthesis by condensing dimethylallyl diphosphate (DMAP) and tryptophan to form 4-dimethylallyl-L-tryptophan. The second step is catalyzed by the methyltransferase easF that methylates 4-dimethylallyl-L-tryptophan in the presence of S-adenosyl-L-methionine, resulting in the formation of 4-dimethylallyl-L-abrine. The catalase easC and the FAD-dependent oxidoreductase easE then transform 4-dimethylallyl-L-abrine to chanoclavine-I which is further oxidized by easD in the presence of NAD(+), resulting in the formation of chanoclavine-I aldehyde. Agroclavine dehydrogenase easG then mediates the conversion of chanoclavine-I aldehyde to agroclavine via a non-enzymatic adduct reaction: the substrate is an iminium intermediate that is formed spontaneously from chanoclavine-I aldehyde in the presence of glutathione. The presence of easA is not required to complete this reaction. Further conversion of agroclavine to paspalic acid is a two-step process involving oxidation of agroclavine to elymoclavine and of elymoclavine to paspalic acid, the second step being performed by the elymoclavine oxidase cloA. Paspalic acid is then further converted to D-lysergic acid. Ergopeptines are assembled from D-lysergic acid and three different amino acids by the D-lysergyl-peptide-synthetases composed each of a monomudular and a trimodular nonribosomal peptide synthetase subunit. LpsB and lpsC encode the monomodular subunits responsible for D-lysergic acid activation and incorporation into the ergopeptine backbone. LpsA1 and A2 subunits encode the trimodular nonribosomal peptide synthetase assembling the tripeptide portion of ergopeptines. LpsA1 is responsible for formation of the major ergopeptine, ergotamine, and lpsA2 for alpha-ergocryptine, the minor ergopeptine of the total alkaloid mixture elaborated by C.purpurea. D-lysergyl-tripeptides are assembled by the nonribosomal peptide synthetases and released as N-(D-lysergyl-aminoacyl)-lactams. Cyclolization of the D-lysergyl-tripeptides is performed by the Fe(2+)/2-ketoglutarate-dependent dioxygenase easH which introduces a hydroxyl group into N-(D-lysergyl-aminoacyl)-lactam at alpha-C of the aminoacyl residue followed by spontaneous condensation with the terminal lactam carbonyl group. The polypeptide is Agroclavine dehydrogenase (Claviceps purpurea (Ergot fungus)).